The following is a 335-amino-acid chain: Phosphatidylglycerol--prolipoprotein diacylglyceryl transferase (335 aa).

The next 3 membrane-spanning stretches (helical) occupy residues 31-51 (IYWYGIIFVCGFLIAILTYSL), 67-87 (YIFLAIPMTIIGARLWSLAIG), and 100-120 (LAIQGGVIAGVLSAAVYFPLI). An a 1,2-diacyl-sn-glycero-3-phospho-(1'-sn-glycerol)-binding site is contributed by Arg-163. 3 helical membrane-spanning segments follow: residues 213–233 (PLFLYESFFNVIVFVFIYFGL), 235–255 (YIKQLKIGFISMSYFFFYGVT), and 277–297 (SLLLIFGVLGALYVQFIAPLL).

This sequence belongs to the Lgt family.

Its subcellular location is the cell membrane. The catalysed reaction is L-cysteinyl-[prolipoprotein] + a 1,2-diacyl-sn-glycero-3-phospho-(1'-sn-glycerol) = an S-1,2-diacyl-sn-glyceryl-L-cysteinyl-[prolipoprotein] + sn-glycerol 1-phosphate + H(+). It participates in protein modification; lipoprotein biosynthesis (diacylglyceryl transfer). In terms of biological role, catalyzes the transfer of the diacylglyceryl group from phosphatidylglycerol to the sulfhydryl group of the N-terminal cysteine of a prolipoprotein, the first step in the formation of mature lipoproteins. In Ureaplasma parvum serovar 3 (strain ATCC 27815 / 27 / NCTC 11736), this protein is Phosphatidylglycerol--prolipoprotein diacylglyceryl transferase.